The chain runs to 742 residues: Synaptic vesicle glycoprotein 2A (742 aa).

Positions 1-57 are interaction with SYT1; the sequence is MEEGFRDRAAFIRGAKDIAKEVKKHAAKKVVKGLDRVQDEYSRRSYSRFEEEDDDDD. Over 1–169 the chain is Cytoplasmic; the sequence is MEEGFRDRAA…GHGRFQWTLY (169 aa). Residues 40 to 49 show a composition bias toward basic and acidic residues; it reads EYSRRSYSRF. Residues 40 to 145 form a disordered region; the sequence is EYSRRSYSRF…RGEAQRRKDR (106 aa). S80 and S81 each carry phosphoserine. T84 is subject to Phosphothreonine. Residues 122–137 are compositionally biased toward gly residues; sequence VRGGLSDGEGPPGGRG. S127 bears the Phosphoserine mark. A helical transmembrane segment spans residues 170–190; the sequence is FVLGLALMADGVEVFVVGFVL. Residues 191–205 are Extracellular-facing; that stretch reads PSAEKDMCLSDSNKG. Residues 206-226 traverse the membrane as a helical segment; it reads MLGLIVYLGMMVGAFLWGGLA. The Cytoplasmic portion of the chain corresponds to 227-233; sequence DRLGRRQ. Residues 234–254 form a helical membrane-spanning segment; it reads CLLISLSVNSVFAFFSSFVQG. The Extracellular segment spans residues 255–262; that stretch reads YGTFLFCR. The helical transmembrane segment at 263-283 threads the bilayer; it reads LLSGVGIGGSIPIVFSYFSEF. The Cytoplasmic segment spans residues 284–294; sequence LAQEKRGEHLS. Residues 295-315 traverse the membrane as a helical segment; that stretch reads WLCMFWMIGGVYAAAMAWAII. The Extracellular segment spans residues 316 to 334; sequence PHYGWSFQMGSAYQFHSWR. Residues 335-355 form a helical membrane-spanning segment; it reads VFVLVCAFPSVFAIGALTTQP. Over 356–447 the chain is Cytoplasmic; sequence ESPRFFLENG…CFSPEYRRIT (92 aa). S393 is modified (phosphoserine). A helical membrane pass occupies residues 448-468; it reads LMMMGVWFTMSFSYYGLTVWF. The Extracellular portion of the chain corresponds to 469–598; sequence PDMIRHLQAV…GTGEGAYMVY (130 aa). Residue Y480 is modified to Phosphotyrosine. Residues N498, N548, and N573 are each glycosylated (N-linked (GlcNAc...) asparagine). The helical transmembrane segment at 599–619 threads the bilayer; the sequence is FVSFLGTLAVLPGNIVSALLM. Residues 620–626 lie on the Cytoplasmic side of the membrane; the sequence is DKIGRLR. Residues 627-647 form a helical membrane-spanning segment; it reads MLAGSSVLSCVSCFFLSFGNS. At 648 to 651 the chain is on the extracellular side; that stretch reads ESAM. The chain crosses the membrane as a helical span at residues 652–672; it reads IALLCLFGGVSIASWNALDVL. Residues 673–685 lie on the Cytoplasmic side of the membrane; it reads TVELYPSDKRTTA. A helical transmembrane segment spans residues 686–708; it reads FGFLNALCKLAAVLGISIFTSFV. Residues 709–712 lie on the Extracellular side of the membrane; it reads GITK. The chain crosses the membrane as a helical span at residues 713–731; sequence AAPILFASAALALGSSLAL. Topologically, residues 732-742 are cytoplasmic; sequence KLPETRGQVLQ.

Belongs to the major facilitator superfamily. As to quaternary structure, interacts with SYT1/synaptotagmin-1 in a calcium-dependent manner. Binds the adapter protein complex AP-2. (Microbial infection) Interacts with C.botulinum neurotoxin type A (BoNT/A, botA). In terms of processing, phosphorylation by CK1 of the N-terminal cytoplasmic domain regulates interaction with SYT1. Post-translationally, N-glycosylated. Expressed in conventional synapses and cone ribbon synapses in the retina (at protein level). Expressed in diaphragm motor nerve terminals (at protein level). Expressed in hippocampus neurons (at protein level).

It localises to the presynapse. It is found in the cytoplasmic vesicle. The protein localises to the secretory vesicle. Its subcellular location is the synaptic vesicle membrane. Its function is as follows. Plays a role in the control of regulated secretion in neural and endocrine cells, enhancing selectively low-frequency neurotransmission. Positively regulates vesicle fusion by maintaining the readily releasable pool of secretory vesicles. (Microbial infection) Receptor for C.botulinum neurotoxin type A (BoNT/A, botA); the toxin probably binds via extracellular loop 4. Functionally, (Microbial infection) Possible receptor for C.botulinum neurotoxin type D (BoNT/D, botD); BoNT/D does not bind to extracellular loop 4 as do BoNT/A and BoNT/E. In terms of biological role, (Microbial infection) Receptor for C.botulinum neurotoxin type E (BoNT/E); the toxin probably binds via extracellular loop 4. It probably requires glycosylation of Asn-573. The chain is Synaptic vesicle glycoprotein 2A (Sv2a) from Mus musculus (Mouse).